Reading from the N-terminus, the 380-residue chain is Erythronate-4-phosphate dehydrogenase (380 aa).

Residues serine 45 and threonine 66 each contribute to the substrate site. NAD(+)-binding positions include 126 to 127 (QV), aspartate 146, threonine 174, 205 to 207 (ASR), and aspartate 231. Arginine 207 is an active-site residue. Glutamate 236 is a catalytic residue. The active-site Proton donor is histidine 253. Glycine 256 contributes to the NAD(+) binding site. Tyrosine 257 provides a ligand contact to substrate.

The protein belongs to the D-isomer specific 2-hydroxyacid dehydrogenase family. PdxB subfamily. In terms of assembly, homodimer.

Its subcellular location is the cytoplasm. The enzyme catalyses 4-phospho-D-erythronate + NAD(+) = (R)-3-hydroxy-2-oxo-4-phosphooxybutanoate + NADH + H(+). It participates in cofactor biosynthesis; pyridoxine 5'-phosphate biosynthesis; pyridoxine 5'-phosphate from D-erythrose 4-phosphate: step 2/5. In terms of biological role, catalyzes the oxidation of erythronate-4-phosphate to 3-hydroxy-2-oxo-4-phosphonooxybutanoate. This is Erythronate-4-phosphate dehydrogenase from Pseudomonas syringae pv. syringae (strain B728a).